The sequence spans 199 residues: Recombination protein RecR (199 aa).

The segment at 57–72 (CQSCRTYTEESLCPIC) adopts a C4-type zinc-finger fold. Residues 81 to 176 (STICVVETPA…VISRIAHGVP (96 aa)) enclose the Toprim domain.

The protein belongs to the RecR family.

Functionally, may play a role in DNA repair. It seems to be involved in an RecBC-independent recombinational process of DNA repair. It may act with RecF and RecO. The protein is Recombination protein RecR of Shewanella sp. (strain ANA-3).